Consider the following 348-residue polypeptide: tRNA pseudouridine synthase D (348 aa).

Aspartate 84 functions as the Nucleophile in the catalytic mechanism. Residues 162–308 form the TRUD domain; that stretch reads GVPNYFGPQR…ARMDRRPLCL (147 aa).

It belongs to the pseudouridine synthase TruD family.

It catalyses the reaction uridine(13) in tRNA = pseudouridine(13) in tRNA. Functionally, responsible for synthesis of pseudouridine from uracil-13 in transfer RNAs. The sequence is that of tRNA pseudouridine synthase D from Chromohalobacter salexigens (strain ATCC BAA-138 / DSM 3043 / CIP 106854 / NCIMB 13768 / 1H11).